The following is a 474-amino-acid chain: Phenylalanine--tRNA ligase alpha subunit (474 aa).

L-phenylalanine contacts are provided by residues Thr-317, 356–358, and Tyr-396; that span reads QLE. Residue Glu-398 participates in Mg(2+) binding. L-phenylalanine is bound at residue Phe-421.

Belongs to the class-II aminoacyl-tRNA synthetase family. Phe-tRNA synthetase alpha subunit type 2 subfamily. Tetramer of two alpha and two beta subunits. Requires Mg(2+) as cofactor.

The protein resides in the cytoplasm. It catalyses the reaction tRNA(Phe) + L-phenylalanine + ATP = L-phenylalanyl-tRNA(Phe) + AMP + diphosphate + H(+). The protein is Phenylalanine--tRNA ligase alpha subunit of Archaeoglobus fulgidus (strain ATCC 49558 / DSM 4304 / JCM 9628 / NBRC 100126 / VC-16).